The primary structure comprises 551 residues: Cytochrome c oxidase subunit 1 homolog (551 aa).

A run of 3 helical transmembrane segments spans residues Gly-14–Ala-34, Glu-40–Gly-60, and Val-88–Ala-108. His-132 provides a ligand contact to heme b. 8 helical membrane-spanning segments follow: residues Thr-133 to Val-153, Phe-169 to Ile-189, Ala-202 to Leu-222, Ile-229 to Gly-249, Gly-280 to Ile-300, Leu-313 to Leu-333, Leu-345 to Leu-365, and Met-383 to Val-403. Cu cation contacts are provided by His-281, His-331, and His-332. Heme b is bound by residues His-419 and His-421. 3 helical membrane-spanning segments follow: residues Ala-424 to Trp-444, Phe-459 to Leu-479, and Ile-513 to Ile-533.

Belongs to the heme-copper respiratory oxidase family. The cofactor is Cu(2+). Heme b is required as a cofactor.

Its subcellular location is the cell membrane. It carries out the reaction 4 Fe(II)-[cytochrome c] + O2 + 8 H(+)(in) = 4 Fe(III)-[cytochrome c] + 2 H2O + 4 H(+)(out). It functions in the pathway energy metabolism; oxidative phosphorylation. Functionally, cytochrome c oxidase is the component of the respiratory chain that catalyzes the reduction of oxygen to water. Subunits 1-3 form the functional core of the enzyme complex. Co I is the catalytic subunit of the enzyme. Electrons originating in cytochrome c or a quinol are transferred to the bimetallic center formed by a high-spin heme and copper B. The sequence is that of Cytochrome c oxidase subunit 1 homolog (fixN) from Azorhizobium caulinodans (strain ATCC 43989 / DSM 5975 / JCM 20966 / LMG 6465 / NBRC 14845 / NCIMB 13405 / ORS 571).